A 269-amino-acid polypeptide reads, in one-letter code: Putative imidazole glycerol phosphate synthase subunit hisF2 (269 aa).

Aspartate 133 is a catalytic residue.

This sequence belongs to the HisA/HisF family. As to quaternary structure, heterodimer of HisH and HisF.

Its subcellular location is the cytoplasm. It carries out the reaction 5-[(5-phospho-1-deoxy-D-ribulos-1-ylimino)methylamino]-1-(5-phospho-beta-D-ribosyl)imidazole-4-carboxamide + L-glutamine = D-erythro-1-(imidazol-4-yl)glycerol 3-phosphate + 5-amino-1-(5-phospho-beta-D-ribosyl)imidazole-4-carboxamide + L-glutamate + H(+). It participates in amino-acid biosynthesis; L-histidine biosynthesis; L-histidine from 5-phospho-alpha-D-ribose 1-diphosphate: step 5/9. IGPS catalyzes the conversion of PRFAR and glutamine to IGP, AICAR and glutamate. The HisF subunit catalyzes the cyclization activity that produces IGP and AICAR from PRFAR using the ammonia provided by the HisH subunit. The protein is Putative imidazole glycerol phosphate synthase subunit hisF2 (hisF2) of Parasynechococcus marenigrum (strain WH8102).